The sequence spans 329 residues: Fructose-1,6-bisphosphatase class 1 (329 aa).

Residues glutamate 84, aspartate 103, leucine 105, and aspartate 106 each coordinate Mg(2+). Residues 106 to 109 (DGSS), asparagine 196, and lysine 262 each bind substrate. Mg(2+) is bound at residue glutamate 268.

It belongs to the FBPase class 1 family. Homotetramer. The cofactor is Mg(2+).

The protein resides in the cytoplasm. It carries out the reaction beta-D-fructose 1,6-bisphosphate + H2O = beta-D-fructose 6-phosphate + phosphate. Its pathway is carbohydrate biosynthesis; gluconeogenesis. This chain is Fructose-1,6-bisphosphatase class 1, found in Shewanella halifaxensis (strain HAW-EB4).